The sequence spans 369 residues: Glycerol-3-phosphate dehydrogenase [NAD(P)+] (369 aa).

Residues Ser-6, Trp-7, Arg-27, Arg-28, and Lys-101 each contribute to the NADPH site. Positions 101 and 131 each coordinate sn-glycerol 3-phosphate. NADPH is bound at residue Ala-135. Lys-186, Asp-239, Ser-249, Arg-250, and Asn-251 together coordinate sn-glycerol 3-phosphate. Residue Lys-186 is the Proton acceptor of the active site. Arg-250 contributes to the NADPH binding site. Glu-276 lines the NADPH pocket. A disordered region spans residues 312 to 369; it reads KDIAPHLTTDDEPQGERTRGERTTDDGQGQGRTSVWGSLKRAFDQLRDGGGSSRRDRP. Basic and acidic residues-rich tracts occupy residues 325-336 and 352-369; these read QGERTRGERTTD and RAFD…RDRP.

The protein belongs to the NAD-dependent glycerol-3-phosphate dehydrogenase family.

Its subcellular location is the cytoplasm. The enzyme catalyses sn-glycerol 3-phosphate + NAD(+) = dihydroxyacetone phosphate + NADH + H(+). It carries out the reaction sn-glycerol 3-phosphate + NADP(+) = dihydroxyacetone phosphate + NADPH + H(+). The protein operates within membrane lipid metabolism; glycerophospholipid metabolism. In terms of biological role, catalyzes the reduction of the glycolytic intermediate dihydroxyacetone phosphate (DHAP) to sn-glycerol 3-phosphate (G3P), the key precursor for phospholipid synthesis. The sequence is that of Glycerol-3-phosphate dehydrogenase [NAD(P)+] from Leifsonia xyli subsp. xyli (strain CTCB07).